The following is a 166-amino-acid chain: UPF0304 protein VV1_2093 (166 aa).

This sequence belongs to the UPF0304 family.

The sequence is that of UPF0304 protein VV1_2093 from Vibrio vulnificus (strain CMCP6).